The sequence spans 47 residues: MSNPRGNPKYFNPNHLGTQPRAAGGNKGKKMQDQSGQHAQVIQTKGE.

The segment at 1 to 47 is disordered; sequence MSNPRGNPKYFNPNHLGTQPRAAGGNKGKKMQDQSGQHAQVIQTKGE. Polar residues predominate over residues 33 to 47; sequence DQSGQHAQVIQTKGE.

The protein belongs to the SspN family.

Its subcellular location is the spore core. This Geobacillus sp. (strain WCH70) protein is Small, acid-soluble spore protein N.